The sequence spans 151 residues: Protein Smg homolog (151 aa).

This sequence belongs to the Smg family.

The chain is Protein Smg homolog from Laribacter hongkongensis (strain HLHK9).